The following is a 61-amino-acid chain: Small ribosomal subunit protein uS14 (61 aa).

Zn(2+)-binding residues include C24, C27, C40, and C43.

This sequence belongs to the universal ribosomal protein uS14 family. Zinc-binding uS14 subfamily. In terms of assembly, part of the 30S ribosomal subunit. Contacts proteins S3 and S10. Requires Zn(2+) as cofactor.

Its function is as follows. Binds 16S rRNA, required for the assembly of 30S particles and may also be responsible for determining the conformation of the 16S rRNA at the A site. This chain is Small ribosomal subunit protein uS14, found in Desulfosudis oleivorans (strain DSM 6200 / JCM 39069 / Hxd3) (Desulfococcus oleovorans).